Consider the following 513-residue polypeptide: MKLAYWMYAGPAHIGTLRVASSFRNVHAIMHAPLGDDYFNVMRSMLERERDFTPVTASIVDRHVLARGSQEKVVENITRKDKEERPDLIVLTPTCTSSILQEDLQNFVDRASIASNSDVILADVNHYRVNELQAADRTLEQVVRYYLDKARRQGTLSQSITEKPSVNIIGMFTLGFHNQHDCKELKRLLQDLGIQVNEVIPEGGSVENLRNLPKAWLNLVPYREVGLMTALYLEKEFGMPYVATTPMGIVGTAEFVRQIQSHINKWAPMFLGKLVDYEPYIDQQTRFISQAAWFSRSIDCQNLTGKKVVVFGDTTHAASMTKILAREMGIHVVCAGTYCKHDADWFKEQVQGYCDEILVTDDHTQVGDMIARIEPAAIFGSQMERHIGKRLDIPCGVISAPVHIQNFPLGYRPFLGYEGTNQIADLVYNSFTLGMEDHLLEMFGGHDTKEVITKSLSTDTDFTWDSESQLELTKIPGFVRAKIKRNTEKFARQNGVAKITVEVMYAAKEALNA.

Asp-36 lines the [4Fe-4S] cluster pocket. Residue Asp-299 is the Proton donor of the active site. 434–435 contributes to the substrate binding site; it reads GM.

It belongs to the ChlB/BchB/BchZ family. As to quaternary structure, protochlorophyllide reductase is composed of three subunits; ChlL, ChlN and ChlB. Forms a heterotetramer of two ChlB and two ChlN subunits. The cofactor is [4Fe-4S] cluster.

It is found in the plastid. Its subcellular location is the chloroplast. It catalyses the reaction chlorophyllide a + oxidized 2[4Fe-4S]-[ferredoxin] + 2 ADP + 2 phosphate = protochlorophyllide a + reduced 2[4Fe-4S]-[ferredoxin] + 2 ATP + 2 H2O. It functions in the pathway porphyrin-containing compound metabolism; chlorophyll biosynthesis (light-independent). Component of the dark-operative protochlorophyllide reductase (DPOR) that uses Mg-ATP and reduced ferredoxin to reduce ring D of protochlorophyllide (Pchlide) to form chlorophyllide a (Chlide). This reaction is light-independent. The NB-protein (ChlN-ChlB) is the catalytic component of the complex. This chain is Light-independent protochlorophyllide reductase subunit B, found in Zygnema circumcarinatum (Green alga).